Here is a 190-residue protein sequence, read N- to C-terminus: dCTP deaminase (190 aa).

A dCTP-binding site is contributed by 113 to 118; sequence KSTYAR. Glutamate 139 (proton donor/acceptor) is an active-site residue. DCTP is bound by residues glutamine 158, tyrosine 172, lysine 181, and glutamine 182.

The protein belongs to the dCTP deaminase family. Homotrimer.

It carries out the reaction dCTP + H2O + H(+) = dUTP + NH4(+). It participates in pyrimidine metabolism; dUMP biosynthesis; dUMP from dCTP (dUTP route): step 1/2. Its function is as follows. Catalyzes the deamination of dCTP to dUTP. This is dCTP deaminase from Chlamydia abortus (strain DSM 27085 / S26/3) (Chlamydophila abortus).